We begin with the raw amino-acid sequence, 466 residues long: Glucose-6-phosphate 1-dehydrogenase 1 (466 aa).

NADP(+) contacts are provided by residues Ser-48, 88 to 89 (DV), and Lys-141. Substrate contacts are provided by His-171, Lys-175, Glu-209, and Asp-228. The active-site Proton acceptor is His-233. Residues Lys-319 and Lys-324 each contribute to the substrate site.

The protein belongs to the glucose-6-phosphate dehydrogenase family.

It catalyses the reaction D-glucose 6-phosphate + NADP(+) = 6-phospho-D-glucono-1,5-lactone + NADPH + H(+). It functions in the pathway carbohydrate degradation; pentose phosphate pathway; D-ribulose 5-phosphate from D-glucose 6-phosphate (oxidative stage): step 1/3. Functionally, catalyzes the oxidation of glucose 6-phosphate to 6-phosphogluconolactone. The chain is Glucose-6-phosphate 1-dehydrogenase 1 from Mycobacterium tuberculosis (strain CDC 1551 / Oshkosh).